A 123-amino-acid chain; its full sequence is Large ribosomal subunit protein bL12 (123 aa).

The protein belongs to the bacterial ribosomal protein bL12 family. Homodimer. Part of the ribosomal stalk of the 50S ribosomal subunit. Forms a multimeric L10(L12)X complex, where L10 forms an elongated spine to which 2 to 4 L12 dimers bind in a sequential fashion. Binds GTP-bound translation factors.

Its function is as follows. Forms part of the ribosomal stalk which helps the ribosome interact with GTP-bound translation factors. Is thus essential for accurate translation. The protein is Large ribosomal subunit protein bL12 of Bartonella henselae (strain ATCC 49882 / DSM 28221 / CCUG 30454 / Houston 1) (Rochalimaea henselae).